We begin with the raw amino-acid sequence, 400 residues long: Serpin E3 (400 aa).

Residues 1-19 (MQSLLLALLLLPVCSPGGA) form the signal peptide. Asparagine 46 carries an N-linked (GlcNAc...) asparagine glycan.

Belongs to the serpin family.

Its subcellular location is the secreted. In terms of biological role, probable serine protease inhibitor. The protein is Serpin E3 (SERPINE3) of Bos taurus (Bovine).